The chain runs to 104 residues: Pyrimidine/purine nucleoside phosphorylase (104 aa).

This sequence belongs to the nucleoside phosphorylase PpnP family.

The catalysed reaction is a purine D-ribonucleoside + phosphate = a purine nucleobase + alpha-D-ribose 1-phosphate. It catalyses the reaction adenosine + phosphate = alpha-D-ribose 1-phosphate + adenine. It carries out the reaction cytidine + phosphate = cytosine + alpha-D-ribose 1-phosphate. The enzyme catalyses guanosine + phosphate = alpha-D-ribose 1-phosphate + guanine. The catalysed reaction is inosine + phosphate = alpha-D-ribose 1-phosphate + hypoxanthine. It catalyses the reaction thymidine + phosphate = 2-deoxy-alpha-D-ribose 1-phosphate + thymine. It carries out the reaction uridine + phosphate = alpha-D-ribose 1-phosphate + uracil. The enzyme catalyses xanthosine + phosphate = alpha-D-ribose 1-phosphate + xanthine. Functionally, catalyzes the phosphorolysis of diverse nucleosides, yielding D-ribose 1-phosphate and the respective free bases. Can use uridine, adenosine, guanosine, cytidine, thymidine, inosine and xanthosine as substrates. Also catalyzes the reverse reactions. This Syntrophotalea carbinolica (strain DSM 2380 / NBRC 103641 / GraBd1) (Pelobacter carbinolicus) protein is Pyrimidine/purine nucleoside phosphorylase.